The following is a 273-amino-acid chain: Mitochondrial distribution and morphology protein 12 (273 aa).

Residues 1–273 (MSIDFDWSKL…LVWPSYITIE (273 aa)) enclose the SMP-LTD domain. A disordered region spans residues 124-145 (LTSPIPESRPSTPMDNHQERDR).

The protein belongs to the MDM12 family. In terms of assembly, component of the ER-mitochondria encounter structure (ERMES) or MDM complex, composed of mmm1, mdm10, mdm12 and mdm34. A mmm1 homodimer associates with one molecule of mdm12 on each side in a pairwise head-to-tail manner, and the SMP-LTD domains of mmm1 and mdm12 generate a continuous hydrophobic tunnel for phospholipid trafficking.

The protein resides in the mitochondrion outer membrane. The protein localises to the endoplasmic reticulum membrane. Its function is as follows. Component of the ERMES/MDM complex, which serves as a molecular tether to connect the endoplasmic reticulum (ER) and mitochondria. Components of this complex are involved in the control of mitochondrial shape and protein biogenesis, and function in nonvesicular lipid trafficking between the ER and mitochondria. Mdm12 is required for the interaction of the ER-resident membrane protein mmm1 and the outer mitochondrial membrane-resident beta-barrel protein mdm10. The mdm12-mmm1 subcomplex functions in the major beta-barrel assembly pathway that is responsible for biogenesis of all mitochondrial outer membrane beta-barrel proteins, and acts in a late step after the SAM complex. The mdm10-mdm12-mmm1 subcomplex further acts in the TOM40-specific pathway after the action of the mdm12-mmm1 complex. Essential for establishing and maintaining the structure of mitochondria and maintenance of mtDNA nucleoids. The sequence is that of Mitochondrial distribution and morphology protein 12 from Schizosaccharomyces pombe (strain 972 / ATCC 24843) (Fission yeast).